A 417-amino-acid polypeptide reads, in one-letter code: Gamma-glutamyl phosphate reductase (417 aa).

It belongs to the gamma-glutamyl phosphate reductase family.

The protein localises to the cytoplasm. The catalysed reaction is L-glutamate 5-semialdehyde + phosphate + NADP(+) = L-glutamyl 5-phosphate + NADPH + H(+). Its pathway is amino-acid biosynthesis; L-proline biosynthesis; L-glutamate 5-semialdehyde from L-glutamate: step 2/2. Its function is as follows. Catalyzes the NADPH-dependent reduction of L-glutamate 5-phosphate into L-glutamate 5-semialdehyde and phosphate. The product spontaneously undergoes cyclization to form 1-pyrroline-5-carboxylate. This chain is Gamma-glutamyl phosphate reductase, found in Haemophilus influenzae (strain ATCC 51907 / DSM 11121 / KW20 / Rd).